A 546-amino-acid polypeptide reads, in one-letter code: (-)-5-epieremophilene synthase STPS1 (546 aa).

Mg(2+) is bound by residues Asp299, Asp303, Asp442, Thr446, and Glu450. The DDXXD motif signature appears at 299-303 (DDTYD).

The protein belongs to the terpene synthase family. Tpsa subfamily. As to quaternary structure, monomer. Requires Mg(2+) as cofactor. Highly expressed in leaves and at lower levels in flowers.

It carries out the reaction (2E,6E)-farnesyl diphosphate = (-)-5-epi-eremophilene + diphosphate. It functions in the pathway secondary metabolite biosynthesis; terpenoid biosynthesis. In terms of biological role, sesquiterpene synthase that catalyzes the conversion of farnesyl diphosphate to (-)-5-epi-eremophilene. This Salvia miltiorrhiza (Chinese sage) protein is (-)-5-epieremophilene synthase STPS1.